Here is a 417-residue protein sequence, read N- to C-terminus: UDP-N-acetylglucosamine 1-carboxyvinyltransferase (417 aa).

22–23 (KN) is a phosphoenolpyruvate binding site. Arg93 contributes to the UDP-N-acetyl-alpha-D-glucosamine binding site. The active-site Proton donor is Cys117. At Cys117 the chain carries 2-(S-cysteinyl)pyruvic acid O-phosphothioketal. Residues 122–126 (RPVDQ), Asp304, and Ile326 each bind UDP-N-acetyl-alpha-D-glucosamine.

This sequence belongs to the EPSP synthase family. MurA subfamily.

It localises to the cytoplasm. The catalysed reaction is phosphoenolpyruvate + UDP-N-acetyl-alpha-D-glucosamine = UDP-N-acetyl-3-O-(1-carboxyvinyl)-alpha-D-glucosamine + phosphate. Its pathway is cell wall biogenesis; peptidoglycan biosynthesis. Functionally, cell wall formation. Adds enolpyruvyl to UDP-N-acetylglucosamine. The chain is UDP-N-acetylglucosamine 1-carboxyvinyltransferase from Neisseria meningitidis serogroup C (strain 053442).